The chain runs to 722 residues: Fatty acid oxidation complex subunit alpha (722 aa).

Residues 1-189 are enoyl-CoA hydratase/isomerase; the sequence is MIYQGKSLSA…AQGAIDAVVE (189 aa). Residue aspartate 296 participates in substrate binding. A 3-hydroxyacyl-CoA dehydrogenase region spans residues 311–722; the sequence is TKAVNKAAVL…SYFTTDVKLA (412 aa). NAD(+) is bound by residues methionine 325, aspartate 344, 401 to 403, lysine 408, and serine 430; that span reads VVE. Histidine 451 functions as the For 3-hydroxyacyl-CoA dehydrogenase activity in the catalytic mechanism. Residue asparagine 454 participates in NAD(+) binding. Residues asparagine 501 and tyrosine 661 each coordinate substrate.

In the N-terminal section; belongs to the enoyl-CoA hydratase/isomerase family. It in the C-terminal section; belongs to the 3-hydroxyacyl-CoA dehydrogenase family. As to quaternary structure, heterotetramer of two alpha chains (FadB) and two beta chains (FadA).

It carries out the reaction a (3S)-3-hydroxyacyl-CoA + NAD(+) = a 3-oxoacyl-CoA + NADH + H(+). The catalysed reaction is a (3S)-3-hydroxyacyl-CoA = a (2E)-enoyl-CoA + H2O. The enzyme catalyses a 4-saturated-(3S)-3-hydroxyacyl-CoA = a (3E)-enoyl-CoA + H2O. It catalyses the reaction (3S)-3-hydroxybutanoyl-CoA = (3R)-3-hydroxybutanoyl-CoA. It carries out the reaction a (3Z)-enoyl-CoA = a 4-saturated (2E)-enoyl-CoA. The catalysed reaction is a (3E)-enoyl-CoA = a 4-saturated (2E)-enoyl-CoA. Its pathway is lipid metabolism; fatty acid beta-oxidation. In terms of biological role, involved in the aerobic and anaerobic degradation of long-chain fatty acids via beta-oxidation cycle. Catalyzes the formation of 3-oxoacyl-CoA from enoyl-CoA via L-3-hydroxyacyl-CoA. It can also use D-3-hydroxyacyl-CoA and cis-3-enoyl-CoA as substrate. In Colwellia psychrerythraea (strain 34H / ATCC BAA-681) (Vibrio psychroerythus), this protein is Fatty acid oxidation complex subunit alpha.